The primary structure comprises 103 residues: Small ribosomal subunit protein uS10 (103 aa).

The protein belongs to the universal ribosomal protein uS10 family. As to quaternary structure, part of the 30S ribosomal subunit.

Its function is as follows. Involved in the binding of tRNA to the ribosomes. The sequence is that of Small ribosomal subunit protein uS10 from Verminephrobacter eiseniae (strain EF01-2).